A 198-amino-acid polypeptide reads, in one-letter code: Virion membrane protein A17 precursor homolog (198 aa).

The Virion surface portion of the chain corresponds to 1–55 (MDNNYLNYYNVFEEFDAGAGIKEKELFTEEQQLSFLPKKGLGNGGFDGVERLYSN). Residues 56 to 76 (IINNNDIKSLLALIMLVFAIN) traverse the membrane as a helical segment. Residues 77–145 (TNSLVALIFI…TSKISKGFKR (69 aa)) lie on the Intravirion side of the membrane. A helical membrane pass occupies residues 146–166 (AIDVVLLVILGFYIVKIYGID). Residues 167-198 (RQISIPSRRYCRQMSGPSSLENLNAFQTHSNY) lie on the Virion surface side of the membrane. Tyr198 bears the Phosphotyrosine mark.

This sequence belongs to the chordopoxvirinae A17 family. As to quaternary structure, interacts (via N-terminus) with D13 scaffold; this interaction helps D13 to associate with membranes. Interacts with A14. Interacts with A27; this interaction allows A27 to be anchored in the mature virion (MV) membrane. Part of a complex composed of A17, A25, A26 and A27. In terms of processing, the 22 kDa precursor is probably cleaved by the I7 protease during virus maturation. Post-translationally, phosphorylated on tyrosine and threonine. Its phosphorylation state is regulated by the F10 kinase and the H1 phosphatase. Phosphorylation by F10 kinase seems to be required to form the membranes associated with IV.

It localises to the virion membrane. In terms of biological role, envelope protein which participates in virus morphogenesis. Needed for an early step in viral crescent membrane formation by interacting with D13 scaffold protein. Its interaction with D13 scaffold protein leads to the formation of rigid, crescent-shaped membranes that assemble around the cytoplasmic virus factory. Membrane anchor for the protein A27. A17-A27 virus envelope protein might be involved in fusion or attachment, and can further associate to A26. The protein is Virion membrane protein A17 precursor homolog of Fowlpox virus (strain NVSL) (FPV).